Consider the following 337-residue polypeptide: Lipoyl synthase (337 aa).

The [4Fe-4S] cluster site is built by cysteine 81, cysteine 86, cysteine 92, cysteine 107, cysteine 111, cysteine 114, and serine 323. The 220-residue stretch at 93–312 folds into the Radical SAM core domain; that stretch reads FSHGTATFMI…EDYGNALGFS (220 aa).

It belongs to the radical SAM superfamily. Lipoyl synthase family. It depends on [4Fe-4S] cluster as a cofactor.

It localises to the cytoplasm. It catalyses the reaction [[Fe-S] cluster scaffold protein carrying a second [4Fe-4S](2+) cluster] + N(6)-octanoyl-L-lysyl-[protein] + 2 oxidized [2Fe-2S]-[ferredoxin] + 2 S-adenosyl-L-methionine + 4 H(+) = [[Fe-S] cluster scaffold protein] + N(6)-[(R)-dihydrolipoyl]-L-lysyl-[protein] + 4 Fe(3+) + 2 hydrogen sulfide + 2 5'-deoxyadenosine + 2 L-methionine + 2 reduced [2Fe-2S]-[ferredoxin]. It functions in the pathway protein modification; protein lipoylation via endogenous pathway; protein N(6)-(lipoyl)lysine from octanoyl-[acyl-carrier-protein]: step 2/2. Catalyzes the radical-mediated insertion of two sulfur atoms into the C-6 and C-8 positions of the octanoyl moiety bound to the lipoyl domains of lipoate-dependent enzymes, thereby converting the octanoylated domains into lipoylated derivatives. The chain is Lipoyl synthase from Xanthomonas euvesicatoria pv. vesicatoria (strain 85-10) (Xanthomonas campestris pv. vesicatoria).